A 252-amino-acid polypeptide reads, in one-letter code: Uracil-DNA glycosylase (252 aa).

The active-site Proton acceptor is aspartate 87.

It belongs to the uracil-DNA glycosylase (UDG) superfamily. UNG family.

Its subcellular location is the host nucleus. The catalysed reaction is Hydrolyzes single-stranded DNA or mismatched double-stranded DNA and polynucleotides, releasing free uracil.. Functionally, excises uracil residues from the DNA which can arise as a result of misincorporation of dUMP residues by DNA polymerase or deamination of cytosines. Therefore may reduce deleterious uracil incorporation into the viral genome, particularly in terminally differentiated cells which lack DNA repair enzymes. The protein is Uracil-DNA glycosylase (46) of Saimiri sciureus (Common squirrel monkey).